The sequence spans 240 residues: Protein OPG176 (240 aa).

Belongs to the orthopoxvirus OPG176 family. Tetramer. Interacts with host MYD88, TRF4, TICAM2 and MAL.

In terms of biological role, BCL2-like protein which disrupts the host immune response by inhibiting the TLR4 signaling pathway leading to NF-kappa-B activation. Acts close to the plasma membrane and targets several host TIR-domain containing adapter proteins including MYD88, TIRAP, TRIF and TICAM2. In turn, blocks the host NF-kappa-B and TRIF-mediated IRF3 activation. In Cynomys gunnisoni (Gunnison's prairie dog), this protein is Protein OPG176 (OPG176).